Here is a 432-residue protein sequence, read N- to C-terminus: 3-chlorobenzoate-3,4-dioxygenase oxygenase subunit (432 aa).

Residues Trp-27–Val-133 form the Rieske domain. Residues Cys-69, His-71, Cys-88, and His-91 each contribute to the [2Fe-2S] cluster site. The Fe cation site is built by His-180 and His-185.

The protein belongs to the bacterial ring-hydroxylating dioxygenase alpha subunit family. In terms of assembly, this dioxygenase system consists of two proteins: an oxygenase and an oxygenase reductase. Requires [2Fe-2S] cluster as cofactor. Fe cation is required as a cofactor.

The polypeptide is 3-chlorobenzoate-3,4-dioxygenase oxygenase subunit (cbaA) (Comamonas testosteroni (Pseudomonas testosteroni)).